We begin with the raw amino-acid sequence, 588 residues long: MDSSVSTEPLSKNALKREKKAKEKEQLEQEKKAAAVAKRQMEQHNLPENDDLDPTQYLANRLRNIESLRESGINPYPHKFFITMSIPEFISRYAHLNTGEFPEDIDMSLAGRVISKRASSSKLYFYELLGGGARVQVLASARDSDVDAVQFSNYQSGVKRGDIIGVRGYPGKSKRGELSIFAKPFIVLAPCLHMLPRRLTSSIVDETRTQNFQGITAYDTWTPGDLRNPESYVLRDQETRYRQRYLDLMMNPEVRALFRTRARIISYIRSFLDNLEFLEVETPSMNLTAGGASARPFITHHNELDTELLIRVSPELYLKKLVVGGFDRVYELGKHFRNEGMDLTHSPEFTMCELYMAYADYNDLMDLTEQLLSGMVKDLTGSYKIRYHANGLDNEPIEIDFTPPFRKIDMLSELEKVANISIPRDLSSESANKHLVDVCEKFDVKCPPPHTTTRLLDKLVGHFIEVNCINPTFIINHPEIMSPLAKSRRSEPGLTERFNLFVNRRELCDAYTELNDPTAQRERFAEQLKDRQLGDDEAMDLDESFITALEYGLPPTGGLGMGIDRLTMLLTDSQNVKEVILFPAMRLQ.

Residues methionine 1–leucine 10 are compositionally biased toward polar residues. Residues methionine 1–proline 54 are disordered. Over residues lysine 20 to proline 47 the composition is skewed to basic and acidic residues.

Belongs to the class-II aminoacyl-tRNA synthetase family.

The protein localises to the cytoplasm. The catalysed reaction is tRNA(Lys) + L-lysine + ATP = L-lysyl-tRNA(Lys) + AMP + diphosphate. The chain is Lysine--tRNA ligase (LYSRS) from Solanum lycopersicum (Tomato).